The following is a 438-amino-acid chain: MKSFYLETFGCQMNVVDSEQIVGLVQSLGYSSVDSPEQANLIILNTCSIRARAERKVYGHLGRFKPLKQRRPELIIAVCGCVAQQEGQRMLEKVPYLDIVCGTHNIHRLADMVRDAELHRARHVEVDFLEADKRRRLFPERAPSAEVSRFVTVIQGCDNFCSYCIVPHVRGREVSRPSAEVLEEVRLLVEQGAREITLIGQNVNSYGCKEDDEISFASLLRKVAEVDGLERIRFMTSHPKDLSDELIDCFADLDKLCKHIHLPVQAGGDAVLKAMRRGYTRDQYLGRIERLRRVCPEIRMTSDVIVGFPGETESEFEQTMDLLERARFTEIYSFIFSARPGTSAADLPDDIPKEVKQQWFDRMLALQEEITRQYHQMDIGQVLPVLVEGSSRQGNGQLFGRTTWNRIVNFDGNPDLVGRIVPVRLTVAYRNSHLGERV.

Positions 2–118 (KSFYLETFGC…LADMVRDAEL (117 aa)) constitute an MTTase N-terminal domain. [4Fe-4S] cluster contacts are provided by Cys-11, Cys-47, Cys-81, Cys-157, Cys-161, and Cys-164. Residues 143–373 (PSAEVSRFVT…LALQEEITRQ (231 aa)) form the Radical SAM core domain. One can recognise a TRAM domain in the interval 376–438 (QMDIGQVLPV…YRNSHLGERV (63 aa)).

This sequence belongs to the methylthiotransferase family. MiaB subfamily. As to quaternary structure, monomer. It depends on [4Fe-4S] cluster as a cofactor.

The protein resides in the cytoplasm. It catalyses the reaction N(6)-dimethylallyladenosine(37) in tRNA + (sulfur carrier)-SH + AH2 + 2 S-adenosyl-L-methionine = 2-methylsulfanyl-N(6)-dimethylallyladenosine(37) in tRNA + (sulfur carrier)-H + 5'-deoxyadenosine + L-methionine + A + S-adenosyl-L-homocysteine + 2 H(+). Its function is as follows. Catalyzes the methylthiolation of N6-(dimethylallyl)adenosine (i(6)A), leading to the formation of 2-methylthio-N6-(dimethylallyl)adenosine (ms(2)i(6)A) at position 37 in tRNAs that read codons beginning with uridine. The polypeptide is tRNA-2-methylthio-N(6)-dimethylallyladenosine synthase (Syntrophotalea carbinolica (strain DSM 2380 / NBRC 103641 / GraBd1) (Pelobacter carbinolicus)).